A 418-amino-acid chain; its full sequence is Nuclear receptor coactivator 6 (418 aa).

Disordered stretches follow at residues 1–21 and 77–98; these read EQIMTNQMQGNKAQFNSQNQS and PPGPSPHMAQQHTDPATTANND. Positions 1-215 are TBP/GTF2A-binding region; that stretch reads EQIMTNQMQG…PPRKKKNCHQ (215 aa). The CREBBP-binding region stretch occupies residues 1–352; sequence EQIMTNQMQG…LPVSQNVHPP (352 aa). An NCOA1-binding region region spans residues 1 to 418; that stretch reads EQIMTNQMQG…YQESPQNSSS (418 aa). Residues 60–214 form an NCOA6IP-binding region region; sequence VSNSPSQVMG…KPPRKKKNCH (155 aa). Residues 84–98 are compositionally biased toward polar residues; that stretch reads MAQQHTDPATTANND. Residue serine 171 is modified to Phosphoserine. Positions 174–178 match the LXXLL motif motif; the sequence is LVNLL. A disordered region spans residues 186 to 418; it reads HFGVNNKQNN…YQESPQNSSS (233 aa). Residues 190–199 are compositionally biased toward low complexity; it reads NNKQNNTNAN. Over residues 200 to 212 the composition is skewed to basic residues; sequence KQKKKKPPRKKKN. Residues 269-279 show a composition bias toward low complexity; it reads PLQQMPPQLMQ. A compositionally biased stretch (pro residues) spans 282–310; the sequence is APPPQPPQQQPQPQLPQQQPQPQPPPPSQ. Over residues 311–336 the composition is skewed to low complexity; it reads PQSQQQQQQQQQQQQQQMMMMLMMQQ. Asymmetric dimethylarginine is present on residues arginine 342 and arginine 353. A compositionally biased stretch (polar residues) spans 358–370; that stretch reads PDSQRVPMQQSGN. At arginine 391 the chain carries Asymmetric dimethylarginine. Residues 399 to 418 are compositionally biased toward polar residues; it reads PLGSNSRKMVYQESPQNSSS.

In terms of assembly, monomer and homodimer. Interacts in vitro with the basal transcription factors GTF2A and TBP, suggesting an autonomous transactivation function. Interacts with NCOA1, CRSP3, RBM14, the histone acetyltransferase proteins EP300 and CREBBP, and with methyltransferase proteins NCOA6IP and PRMT2. Component of the MLL2/3 complex (also named ASCOM complex), at least composed of KMT2D/MLL2 or KMT2C/MLL3, ASH2L, RBBP5, WDR5, NCOA6, DPY30, KDM6A, PAXIP1/PTIP, PAGR1 and alpha- and beta-tubulin. Interacts with ZNF335; may enhance ligand-dependent transcriptional activation by nuclear hormone receptors. Phosphorylated.

Its subcellular location is the nucleus. Nuclear receptor coactivator that directly binds nuclear receptors and stimulates the transcriptional activities in a hormone-dependent fashion. Coactivate expression in an agonist- and AF2-dependent manner. May coactivate expression via a remodeling of chromatin and its interaction with histone acetyltransferase proteins. Involved in the coactivation of different nuclear receptors, such as for steroids (GR and ERs), retinoids (RARs and RXRs), thyroid hormone (TRs), vitamin D3 (VDR) and prostanoids (PPARs). Probably functions as a general coactivator, rather than just a nuclear receptor coactivator. May also be involved in the coactivation of the NF-kappa-B pathway. The protein is Nuclear receptor coactivator 6 (Ncoa6) of Rattus norvegicus (Rat).